The sequence spans 135 residues: Ribonuclease P protein component 2 (135 aa).

Belongs to the eukaryotic/archaeal RNase P protein component 2 family. As to quaternary structure, consists of a catalytic RNA component and at least 4-5 protein subunits.

It localises to the cytoplasm. It carries out the reaction Endonucleolytic cleavage of RNA, removing 5'-extranucleotides from tRNA precursor.. Part of ribonuclease P, a protein complex that generates mature tRNA molecules by cleaving their 5'-ends. The protein is Ribonuclease P protein component 2 of Methanosarcina barkeri (strain Fusaro / DSM 804).